The following is a 212-amino-acid chain: MAGVRVKICGLRTESDVKAAASSGAAYVGLVFFPKSPRHLELAQAQRLALAAPPGVAKVALTVDASDETLDAIVEAVPLDMLQLHGGESPERVAEVRARYGLPVMKAVGVADEGDLPQILEQSLAADQILIDAKPPKGAALPGGNGLSFDWRLISGRHWIRPWMLAGGLTAENLAEAVRRTGASQVDVSSGVESAPGVKDPARIAAFLQTAR.

Belongs to the TrpF family.

It catalyses the reaction N-(5-phospho-beta-D-ribosyl)anthranilate = 1-(2-carboxyphenylamino)-1-deoxy-D-ribulose 5-phosphate. The protein operates within amino-acid biosynthesis; L-tryptophan biosynthesis; L-tryptophan from chorismate: step 3/5. The polypeptide is N-(5'-phosphoribosyl)anthranilate isomerase (Cereibacter sphaeroides (strain ATCC 17029 / ATH 2.4.9) (Rhodobacter sphaeroides)).